Reading from the N-terminus, the 506-residue chain is AMP phosphorylase (506 aa).

Residues glycine 167, 193-198, and threonine 202 contribute to the AMP site; that span reads SRAITG. Catalysis depends on aspartate 255, which acts as the Proton donor. 2 residues coordinate AMP: serine 263 and lysine 287.

Belongs to the thymidine/pyrimidine-nucleoside phosphorylase family. Type 2 subfamily.

The enzyme catalyses AMP + phosphate = alpha-D-ribose 1,5-bisphosphate + adenine. It catalyses the reaction CMP + phosphate = cytosine + alpha-D-ribose 1,5-bisphosphate. It carries out the reaction UMP + phosphate = alpha-D-ribose 1,5-bisphosphate + uracil. In terms of biological role, catalyzes the conversion of AMP and phosphate to adenine and ribose 1,5-bisphosphate (R15P). Exhibits phosphorylase activity toward CMP and UMP in addition to AMP. Functions in an archaeal AMP degradation pathway, together with R15P isomerase and RubisCO. This is AMP phosphorylase from Methanosarcina acetivorans (strain ATCC 35395 / DSM 2834 / JCM 12185 / C2A).